Here is a 529-residue protein sequence, read N- to C-terminus: PTS system alpha-glucoside-specific EIICB component (529 aa).

The PTS EIIC type-1 domain maps to 1 to 416 (MMKKVQRFGG…MDLKTPGRED (416 aa)). The next 12 membrane-spanning stretches (helical) occupy residues 8-28 (FGGA…VVGL), 59-79 (GWTV…ISLA), 91-111 (FALY…FYGI), 130-150 (VPTL…VVYL), 170-190 (VFVY…TVLI), 198-218 (ISAL…IYTF), 222-242 (ILIP…GPAA), 272-292 (GGFA…ALAM), 304-324 (VAAL…TEPL), 328-348 (FLFI…TMAA), 352-372 (AFGV…LNWI), and 380-400 (GTVI…FVVF). The PTS EIIB type-1 domain occupies 450–529 (AQKGAIILEA…ERIEEMMKKG (80 aa)). C472 (phosphocysteine intermediate; for EIIB activity) is an active-site residue.

It localises to the cell membrane. In terms of biological role, the phosphoenolpyruvate-dependent sugar phosphotransferase system (sugar PTS), a major carbohydrate active -transport system, catalyzes the phosphorylation of incoming sugar substrates concomitantly with their translocation across the cell membrane. This system is probably involved in transport of the alpha-glucosides trehalulose, turanose, maltulose and palatinose. The polypeptide is PTS system alpha-glucoside-specific EIICB component (Leptotrichia buccalis (strain ATCC 14201 / DSM 1135 / JCM 12969 / NCTC 10249 / C-1013-b)).